The primary structure comprises 493 residues: Betaine aldehyde dehydrogenase (493 aa).

The K(+) site is built by Ser-32, Ile-33, and Asp-99. 156 to 158 (GAW) is a binding site for NAD(+). Lys-168 (charge relay system) is an active-site residue. Residues 182–185 (KPSE) and 235–238 (SVPT) each bind NAD(+). Leu-250 contributes to the K(+) binding site. Catalysis depends on Glu-256, which acts as the Proton acceptor. NAD(+) contacts are provided by Gly-258, Cys-290, and Glu-390. Cys-290 functions as the Nucleophile in the catalytic mechanism. Cys-290 is modified (cysteine sulfenic acid (-SOH)). Residues Lys-460 and Gly-463 each coordinate K(+). The active-site Charge relay system is Glu-467.

It belongs to the aldehyde dehydrogenase family. As to quaternary structure, dimer of dimers. K(+) serves as cofactor.

It catalyses the reaction betaine aldehyde + NAD(+) + H2O = glycine betaine + NADH + 2 H(+). Its pathway is amine and polyamine biosynthesis; betaine biosynthesis via choline pathway; betaine from betaine aldehyde: step 1/1. Involved in the biosynthesis of the osmoprotectant glycine betaine. Catalyzes the irreversible oxidation of betaine aldehyde to the corresponding acid. In Agrobacterium fabrum (strain C58 / ATCC 33970) (Agrobacterium tumefaciens (strain C58)), this protein is Betaine aldehyde dehydrogenase.